The following is a 118-amino-acid chain: uncharacterized protein (118 aa).

It to M.jannaschii MJ0310 and MJ1340.

This is an uncharacterized protein from Methanocaldococcus jannaschii (strain ATCC 43067 / DSM 2661 / JAL-1 / JCM 10045 / NBRC 100440) (Methanococcus jannaschii).